The following is a 666-amino-acid chain: tRNA 5-methylaminomethyl-2-thiouridine biosynthesis bifunctional protein MnmC (666 aa).

The segment at 1-253 is tRNA (mnm(5)s(2)U34)-methyltransferase; it reads MSSPFAPIIT…KRHMLCAYYE (253 aa). The segment at 283–666 is FAD-dependent cmnm(5)s(2)U34 oxidoreductase; it reads VGGGLAGCFI…FLRKKIIQGP (384 aa).

The protein in the N-terminal section; belongs to the methyltransferase superfamily. tRNA (mnm(5)s(2)U34)-methyltransferase family. This sequence in the C-terminal section; belongs to the DAO family. Requires FAD as cofactor.

Its subcellular location is the cytoplasm. It carries out the reaction 5-aminomethyl-2-thiouridine(34) in tRNA + S-adenosyl-L-methionine = 5-methylaminomethyl-2-thiouridine(34) in tRNA + S-adenosyl-L-homocysteine + H(+). Functionally, catalyzes the last two steps in the biosynthesis of 5-methylaminomethyl-2-thiouridine (mnm(5)s(2)U) at the wobble position (U34) in tRNA. Catalyzes the FAD-dependent demodification of cmnm(5)s(2)U34 to nm(5)s(2)U34, followed by the transfer of a methyl group from S-adenosyl-L-methionine to nm(5)s(2)U34, to form mnm(5)s(2)U34. This Legionella pneumophila (strain Corby) protein is tRNA 5-methylaminomethyl-2-thiouridine biosynthesis bifunctional protein MnmC.